The chain runs to 525 residues: Probable feruloyl esterase B-1 (525 aa).

An N-terminal signal peptide occupies residues 1–20; sequence MMRWFLLIGLASAAATDSSA. Disulfide bonds link Cys-26–Cys-75, Cys-61–Cys-114, Cys-187–Cys-442, Cys-256–Cys-273, Cys-282–Cys-292, and Cys-502–Cys-524. Asn-51, Asn-80, and Asn-98 each carry an N-linked (GlcNAc...) asparagine glycan. The active-site Acyl-ester intermediate is the Ser-188. Ca(2+)-binding residues include Asp-257, Asp-260, Ala-262, and Asp-264. Residues Asn-283, Asn-288, and Asn-351 are each glycosylated (N-linked (GlcNAc...) asparagine). Residues Asp-401 and His-441 each act as charge relay system in the active site.

It belongs to the tannase family.

The protein resides in the secreted. The catalysed reaction is feruloyl-polysaccharide + H2O = ferulate + polysaccharide.. Involved in degradation of plant cell walls. Hydrolyzes the feruloyl-arabinose ester bond in arabinoxylans as well as the feruloyl-galactose and feruloyl-arabinose ester bonds in pectin. This is Probable feruloyl esterase B-1 (faeB-1) from Neosartorya fischeri (strain ATCC 1020 / DSM 3700 / CBS 544.65 / FGSC A1164 / JCM 1740 / NRRL 181 / WB 181) (Aspergillus fischerianus).